The primary structure comprises 277 residues: Sulfur carrier protein FdhD (277 aa).

Cysteine 121 (cysteine persulfide intermediate) is an active-site residue. 260-265 (FCKPGR) lines the Mo-bis(molybdopterin guanine dinucleotide) pocket.

It belongs to the FdhD family.

The protein localises to the cytoplasm. Functionally, required for formate dehydrogenase (FDH) activity. Acts as a sulfur carrier protein that transfers sulfur from IscS to the molybdenum cofactor prior to its insertion into FDH. The chain is Sulfur carrier protein FdhD from Escherichia coli O6:K15:H31 (strain 536 / UPEC).